Consider the following 148-residue polypeptide: Lysozyme C (148 aa).

The signal sequence occupies residues 1–18 (MKALIILGLVLLSVTVQG). The C-type lysozyme domain maps to 19–148 (KIFERCELAR…VSQYVKGCGV (130 aa)). Disulfide bonds link C24-C146, C48-C134, C83-C99, and C95-C113. Catalysis depends on residues E53 and D71.

It belongs to the glycosyl hydrolase 22 family. As to quaternary structure, monomer.

It localises to the secreted. It carries out the reaction Hydrolysis of (1-&gt;4)-beta-linkages between N-acetylmuramic acid and N-acetyl-D-glucosamine residues in a peptidoglycan and between N-acetyl-D-glucosamine residues in chitodextrins.. Functionally, lysozymes have primarily a bacteriolytic function; those in tissues and body fluids are associated with the monocyte-macrophage system and enhance the activity of immunoagents. This is Lysozyme C (LYZ) from Pygathrix nemaeus (Red-shanked douc langur).